A 501-amino-acid chain; its full sequence is Large ribosomal subunit protein uL2m (501 aa).

Disordered stretches follow at residues glycine 187–arginine 217 and alanine 459–asparagine 501. Polar residues predominate over residues asparagine 198–glycine 213. Basic and acidic residues predominate over residues aspartate 464–threonine 474.

The protein belongs to the universal ribosomal protein uL2 family.

It is found in the mitochondrion. This chain is Large ribosomal subunit protein uL2m (RPL2), found in Marchantia polymorpha (Common liverwort).